A 332-amino-acid chain; its full sequence is Glycerol-3-phosphate dehydrogenase [NAD(P)+] (332 aa).

NADPH-binding residues include tryptophan 11, arginine 30, and lysine 108. The sn-glycerol 3-phosphate site is built by lysine 108, glycine 137, and serine 139. Alanine 141 lines the NADPH pocket. 5 residues coordinate sn-glycerol 3-phosphate: lysine 192, aspartate 245, serine 255, arginine 256, and asparagine 257. Lysine 192 functions as the Proton acceptor in the catalytic mechanism. Residue arginine 256 coordinates NADPH. 2 residues coordinate NADPH: valine 280 and glutamate 282.

Belongs to the NAD-dependent glycerol-3-phosphate dehydrogenase family.

The protein resides in the cytoplasm. The catalysed reaction is sn-glycerol 3-phosphate + NAD(+) = dihydroxyacetone phosphate + NADH + H(+). It carries out the reaction sn-glycerol 3-phosphate + NADP(+) = dihydroxyacetone phosphate + NADPH + H(+). It participates in membrane lipid metabolism; glycerophospholipid metabolism. Catalyzes the reduction of the glycolytic intermediate dihydroxyacetone phosphate (DHAP) to sn-glycerol 3-phosphate (G3P), the key precursor for phospholipid synthesis. This is Glycerol-3-phosphate dehydrogenase [NAD(P)+] from Burkholderia cenocepacia (strain HI2424).